A 129-amino-acid chain; its full sequence is Selenoprotein M (129 aa).

The first 19 residues, 1-19, serve as a signal peptide directing secretion; sequence MARGLAVFFLLAGACLALA. Catalysis depends on nucleophile residues Cys-35 and Sec-38. Sec-38 is a non-standard amino acid (selenocysteine). The disordered stretch occupies residues 107 to 129; it reads KSSKDEQVPEEYQEGPYMEKEEL. A Prevents secretion from ER motif is present at residues 126–129; the sequence is KEEL.

This sequence belongs to the selenoprotein M/F family. As to expression, high expression levels observed in hepatopancreas, testis, ovaries and intestine. Also expressed in heart, stomach, gills, cranial ganglia, muscle and hematocytes.

The protein localises to the endoplasmic reticulum. May function as a thiol-disulfide oxidoreductase that participates in disulfide bond formation. Involved in the regulation of reproduction during the period of rapid gonadal development. The protein is Selenoprotein M of Eriocheir sinensis (Chinese mitten crab).